A 424-amino-acid polypeptide reads, in one-letter code: UDP-N-acetylglucosamine 1-carboxyvinyltransferase 3 (424 aa).

22 to 23 contributes to the phosphoenolpyruvate binding site; it reads KN. Arginine 94 lines the UDP-N-acetyl-alpha-D-glucosamine pocket. Aspartate 118 (proton donor) is an active-site residue. UDP-N-acetyl-alpha-D-glucosamine is bound by residues 123 to 127, aspartate 306, and leucine 328; that span reads RPVDQ.

The protein belongs to the EPSP synthase family. MurA subfamily.

The protein resides in the cytoplasm. The catalysed reaction is phosphoenolpyruvate + UDP-N-acetyl-alpha-D-glucosamine = UDP-N-acetyl-3-O-(1-carboxyvinyl)-alpha-D-glucosamine + phosphate. It functions in the pathway cell wall biogenesis; peptidoglycan biosynthesis. Functionally, cell wall formation. Adds enolpyruvyl to UDP-N-acetylglucosamine. The sequence is that of UDP-N-acetylglucosamine 1-carboxyvinyltransferase 3 from Symbiobacterium thermophilum (strain DSM 24528 / JCM 14929 / IAM 14863 / T).